A 536-amino-acid chain; its full sequence is MAKQLAFNDAARRSLEAGIDKLANTVKVTLGPRGRNVVLDKKWGAPTITNDGVTIAREVELDDPFENLGAQLAKEVATKTNDVAGDGTTTATVLAQALVKEGLRNVAAGAAPGQIKRGIEVSVEAVAARLLENARPVEGSQVANVAAISAQSDEIGELLAEAFGKVGKDGVITIEESSTTQTELVLTEGMQFDKGYLSPYFVTDAERQEAVLEDALILINQGKISSVQEFLPLLEKALQSSKPLFIIAEDVEGEALSTLIVNRIRGTLNVVAVKAPGFGDRRKAMLQDIATLTGAQVVSPELGLSLDSVGLEVLGTARRITVTKDNTTIVDGAGTAEDVAARVAQLRAELTRTDSDWDKEKLQERLAKLAGGIGVIKVGAATEVELKEKKHRIEDAVSSTRAALEEGIVAGGGSALIHALKALDEDPAVTALEGDAASAVGIVRRALVQPLRWIAQNAGFDGYVVAAKVAESAVNQGFNAKSGDYEDLIAAGVIDPVKVTRAALRNAASIAALVLTTETLVVEKPADEDEHAGHKH.

Residues 29-32 (TLGP), 86-90 (DGTTT), Gly-412, and Asp-495 contribute to the ATP site.

This sequence belongs to the chaperonin (HSP60) family. Forms a cylinder of 14 subunits composed of two heptameric rings stacked back-to-back. Interacts with the co-chaperonin GroES.

Its subcellular location is the cytoplasm. It catalyses the reaction ATP + H2O + a folded polypeptide = ADP + phosphate + an unfolded polypeptide.. In terms of biological role, together with its co-chaperonin GroES, plays an essential role in assisting protein folding. The GroEL-GroES system forms a nano-cage that allows encapsulation of the non-native substrate proteins and provides a physical environment optimized to promote and accelerate protein folding. This is Chaperonin GroEL 2 from Arthrobacter sp. (strain FB24).